We begin with the raw amino-acid sequence, 190 residues long: uncharacterized protein (190 aa).

Residues 1–28 (MEFSLQYITIFIFVILFLIGLFSSKSRS) form the signal peptide.

This is an uncharacterized protein from Haemophilus influenzae (strain ATCC 51907 / DSM 11121 / KW20 / Rd).